Reading from the N-terminus, the 340-residue chain is tRNA N6-adenosine threonylcarbamoyltransferase (340 aa).

Fe cation-binding residues include His114 and His118. Residues 140 to 144, Asp173, Gly186, Asp190, and Asn281 contribute to the substrate site; that span reads TISGG. Asp309 lines the Fe cation pocket.

Belongs to the KAE1 / TsaD family. Fe(2+) serves as cofactor.

Its subcellular location is the cytoplasm. It catalyses the reaction L-threonylcarbamoyladenylate + adenosine(37) in tRNA = N(6)-L-threonylcarbamoyladenosine(37) in tRNA + AMP + H(+). In terms of biological role, required for the formation of a threonylcarbamoyl group on adenosine at position 37 (t(6)A37) in tRNAs that read codons beginning with adenine. Is involved in the transfer of the threonylcarbamoyl moiety of threonylcarbamoyl-AMP (TC-AMP) to the N6 group of A37, together with TsaE and TsaB. TsaD likely plays a direct catalytic role in this reaction. The chain is tRNA N6-adenosine threonylcarbamoyltransferase from Christiangramia forsetii (strain DSM 17595 / CGMCC 1.15422 / KT0803) (Gramella forsetii).